The sequence spans 341 residues: MTKDILILAVETSCDETSVSVIKNGRDILSNTVLSQIESHKRFGGVVPEVASRHHVEGITTTINEALVDADVSMEDIDAIAVTEGPGLIGALLIGVNAAKALAFAYDKPLIPVHHIAGHIYANHIEEPLTFPLIALIVSGGHTELVYMKDHLSFEVIGETRDDAVGEAYDKVARTIGLNYPGGPQVDRLAAEGEDTYSFPRVWLDKDSYDFSFSGLKSAVINQLHNQRQKNIPIIEANVATSFQNSVVEVLTFKAIQACKEYSVQRLIVAGGVASNKGLRQSLADQCKVNDIQLTIPSPKLCTDNAAMIGVAGHSLYQQGRFADLALNGHSNIDLEEYSAE.

2 residues coordinate Fe cation: His-115 and His-119. Substrate is bound by residues 137–141 (IVSGG), Asp-170, Gly-183, Asp-187, and Asn-276. Asp-304 provides a ligand contact to Fe cation.

It belongs to the KAE1 / TsaD family. Fe(2+) serves as cofactor.

Its subcellular location is the cytoplasm. The catalysed reaction is L-threonylcarbamoyladenylate + adenosine(37) in tRNA = N(6)-L-threonylcarbamoyladenosine(37) in tRNA + AMP + H(+). Its function is as follows. Required for the formation of a threonylcarbamoyl group on adenosine at position 37 (t(6)A37) in tRNAs that read codons beginning with adenine. Is involved in the transfer of the threonylcarbamoyl moiety of threonylcarbamoyl-AMP (TC-AMP) to the N6 group of A37, together with TsaE and TsaB. TsaD likely plays a direct catalytic role in this reaction. In Staphylococcus aureus (strain Mu3 / ATCC 700698), this protein is tRNA N6-adenosine threonylcarbamoyltransferase.